The sequence spans 328 residues: DNA repair and recombination protein RadA (328 aa).

An ATP-binding site is contributed by 118 to 125 (GEYGSGKT).

Belongs to the eukaryotic RecA-like protein family.

Involved in DNA repair and in homologous recombination. Binds and assemble on single-stranded DNA to form a nucleoprotein filament. Hydrolyzes ATP in a ssDNA-dependent manner and promotes DNA strand exchange between homologous DNA molecules. The chain is DNA repair and recombination protein RadA from Desulfurococcus amylolyticus (strain DSM 18924 / JCM 16383 / VKM B-2413 / 1221n) (Desulfurococcus kamchatkensis).